Reading from the N-terminus, the 208-residue chain is N-(5'-phosphoribosyl)anthranilate isomerase (208 aa).

It belongs to the TrpF family.

The catalysed reaction is N-(5-phospho-beta-D-ribosyl)anthranilate = 1-(2-carboxyphenylamino)-1-deoxy-D-ribulose 5-phosphate. It participates in amino-acid biosynthesis; L-tryptophan biosynthesis; L-tryptophan from chorismate: step 3/5. This chain is N-(5'-phosphoribosyl)anthranilate isomerase, found in Desulforamulus reducens (strain ATCC BAA-1160 / DSM 100696 / MI-1) (Desulfotomaculum reducens).